The following is a 329-amino-acid chain: DNA-directed RNA polymerase subunit alpha (329 aa).

The segment at 1–234 (MQGSVTEFLK…EQLDAFVELR (234 aa)) is alpha N-terminal domain (alpha-NTD). An alpha C-terminal domain (alpha-CTD) region spans residues 248–329 (FDPILLRPVD…WPPASLADDL (82 aa)).

Belongs to the RNA polymerase alpha chain family. In terms of assembly, homodimer. The RNAP catalytic core consists of 2 alpha, 1 beta, 1 beta' and 1 omega subunit. When a sigma factor is associated with the core the holoenzyme is formed, which can initiate transcription.

The enzyme catalyses RNA(n) + a ribonucleoside 5'-triphosphate = RNA(n+1) + diphosphate. Functionally, DNA-dependent RNA polymerase catalyzes the transcription of DNA into RNA using the four ribonucleoside triphosphates as substrates. The chain is DNA-directed RNA polymerase subunit alpha from Shewanella sp. (strain ANA-3).